A 277-amino-acid polypeptide reads, in one-letter code: PTS system sorbose-specific EIIC component (277 aa).

A run of 5 helical transmembrane segments spans residues 1 to 21, 92 to 112, 133 to 153, 177 to 197, and 219 to 239; these read MAIS…VGMG, IQKG…LTVL, FTAI…RVSI, VITG…YAMI, and YLKL…IVYV. Positions 3–237 constitute a PTS EIIC type-4 domain; that stretch reads ISTIQIILIF…GAVGLIFAIV (235 aa).

It localises to the cell membrane. Its function is as follows. The phosphoenolpyruvate-dependent sugar phosphotransferase system (PTS), a major carbohydrate active transport system, catalyzes the phosphorylation of incoming sugar substrates concomitant with their translocation across the cell membrane. The enzyme II SorABCD PTS system is involved in L-sorbose transport. This Lacticaseibacillus casei (Lactobacillus casei) protein is PTS system sorbose-specific EIIC component.